The chain runs to 333 residues: Fructose-1,6-bisphosphatase class 1 1 (333 aa).

Positions 81, 100, 102, and 103 each coordinate Mg(2+). Substrate-binding positions include 103 to 106 (DGSS) and Asn-191. Glu-263 serves as a coordination point for Mg(2+).

Belongs to the FBPase class 1 family. As to quaternary structure, homotetramer. Requires Mg(2+) as cofactor.

It localises to the cytoplasm. It catalyses the reaction beta-D-fructose 1,6-bisphosphate + H2O = beta-D-fructose 6-phosphate + phosphate. Its pathway is carbohydrate biosynthesis; Calvin cycle. The sequence is that of Fructose-1,6-bisphosphatase class 1 1 from Cereibacter sphaeroides (strain ATCC 17029 / ATH 2.4.9) (Rhodobacter sphaeroides).